The following is a 210-amino-acid chain: Glutathione S-transferase P 10 (210 aa).

The region spanning 2–81 (AVPQLYYFTI…HLGRVHGLNG (80 aa)) is the GST N-terminal domain. Residues Tyr8, Trp41, Lys45, 52 to 53 (QL), and 65 to 66 (QT) contribute to the glutathione site. The 118-residue stretch at 83–200 (NEQEATFLDM…YLEKRKADKV (118 aa)) folds into the GST C-terminal domain.

Belongs to the GST superfamily. Pi family. As to quaternary structure, homodimer. In terms of tissue distribution, expressed in cells at the mouth and adjacent to the pharyngeal bulbs of the head and also in the tail.

The catalysed reaction is RX + glutathione = an S-substituted glutathione + a halide anion + H(+). Its function is as follows. Conjugation of reduced glutathione to a wide number of exogenous and endogenous hydrophobic electrophiles. Responsible for approximately one-third of 4-hydroxy-2-nonenal conjugation. May play a role in the detoxification of reactive oxygen species produced during pathogenic bacterial infection. The protein is Glutathione S-transferase P 10 of Caenorhabditis elegans.